Here is a 660-residue protein sequence, read N- to C-terminus: DNA primase (660 aa).

Residues 40 to 64 (CPFHKEKTPSFTVSPDKQFYYCFGC) form a CHC2-type zinc finger. Residues 94–115 (GMEVPREQGRRDQKPRQPTDSP) are disordered. The segment covering 97 to 110 (VPREQGRRDQKPRQ) has biased composition (basic and acidic residues). In terms of domain architecture, Toprim spans 261 to 343 (DEIIVVEGYM…GRRARFLFLP (83 aa)). Glu267, Asp311, and Asp313 together coordinate Mg(2+). 2 disordered regions span residues 425 to 449 (DPQQVEQLAQQAPATSSMPDYDPGY) and 476 to 519 (QAWK…APVE). The span at 428-442 (QVEQLAQQAPATSSM) shows a compositional bias: polar residues. Positions 488–498 (PWSDKPWDKNR) are enriched in basic and acidic residues.

It belongs to the DnaG primase family. In terms of assembly, monomer. Interacts with DnaB. Zn(2+) serves as cofactor. Requires Mg(2+) as cofactor.

It catalyses the reaction ssDNA + n NTP = ssDNA/pppN(pN)n-1 hybrid + (n-1) diphosphate.. In terms of biological role, RNA polymerase that catalyzes the synthesis of short RNA molecules used as primers for DNA polymerase during DNA replication. This chain is DNA primase, found in Pseudomonas putida (strain ATCC 47054 / DSM 6125 / CFBP 8728 / NCIMB 11950 / KT2440).